A 577-amino-acid polypeptide reads, in one-letter code: MNIQALLSEKVRQAMIAAGAPADCEPQIRQSAKVQFGDYQANGMMAVAKKLGMAPRQLAEQVLTHLDLNGIASKVEIAGPGFINIFLDPAFLAEHVQQALASDRLGVATPEKQTIVVDYSAPNVAKEMHVGHLRSTIIGDTAVRTLEFLGHKVIRANHVGDWGTQFGMLIAWLEKQQQENAGEMELADLEGFYRDAKKHYDEDEEFAERARNYVVKLQSGDEYFREMWRKLVDITMTQNQITYDRLNVTLTRDDVMGESLYNPMLPGIVADLKAKGLAVESEGATVVFLDEFKNKEGEPMGVIIQKKDGGYLYTTTDIACAKYRYETLHADRVLYYIDSRQHQHLMQAWAIVRKAGYVPESVPLEHHMFGMMLGKDGKPFKTRAGGTVKLADLLDEALERARRLVAEKNPYMPADELEKLANAVGIGAVKYADLSKNRTTDYIFDWDNMLAFEGNTAPYMQYAYTRVLSVFRKAEINEEQLAAAPVIIREDREAQLAARLLQFEETLTVVAREGTPHVMCAYLYDLAGLFSGFYEHCPILSAENEEVRNSRLKLAQLTAKTLKLGLDTLGIETVERM.

The short motif at 122–132 (PNVAKEMHVGH) is the 'HIGH' region element.

It belongs to the class-I aminoacyl-tRNA synthetase family. In terms of assembly, monomer.

It is found in the cytoplasm. It catalyses the reaction tRNA(Arg) + L-arginine + ATP = L-arginyl-tRNA(Arg) + AMP + diphosphate. This Shigella flexneri serotype 5b (strain 8401) protein is Arginine--tRNA ligase.